Reading from the N-terminus, the 473-residue chain is C3a anaphylatoxin chemotactic receptor (473 aa).

At 1-23 (MESFTADTNSTDLHSRPLFKPQD) the chain is on the extracellular side. Asn-9 carries N-linked (GlcNAc...) asparagine glycosylation. A helical transmembrane segment spans residues 24–46 (IASMVILSLTCLLGLPGNGLVLW). The Cytoplasmic segment spans residues 47–57 (VAGVKMKRTVN). Residues 58 to 80 (TVWFLHLTLADFLCCLSLPFSVA) form a helical membrane-spanning segment. The Extracellular segment spans residues 81 to 96 (HLILRGHWPYGLFLCK). A disulfide bridge links Cys-95 with Cys-172. A helical membrane pass occupies residues 97 to 118 (LIPSVIILNMFASVFLLTAISL). Topologically, residues 119-139 (DRCLMVHKPIWCQNHRSVRTA) are cytoplasmic. The chain crosses the membrane as a helical span at residues 140 to 160 (FAVCGCVWVVTFVMCIPVFVY). Residues 161-329 (RDLLVVDDYS…TPQVAITISR (169 aa)) lie on the Extracellular side of the membrane. 2 positions are modified to sulfotyrosine: Tyr-174 and Tyr-184. An N-linked (GlcNAc...) asparagine glycan is attached at Asn-201. The disordered stretch occupies residues 233–252 (FHTSPEDPFSQDSASQQPHY). Residue Tyr-308 is modified to Sulfotyrosine. Residues 330–349 (LVVGFLVPFFIMITCYSLIV) form a helical membrane-spanning segment. Topologically, residues 350 to 366 (FRMRKTNLTKSRNKTLR) are cytoplasmic. A helical membrane pass occupies residues 367–389 (VAVAVVTVFFVCWIPYHIVGILL). Topologically, residues 390-406 (VITDQESALREVVLPWD) are extracellular. A helical transmembrane segment spans residues 407–427 (HMSIALASANSCFNPFLYALL). Residues 428-473 (GKDFRKKARQSVKGILEAAFSEELTHSTSCTQDKAPSKRNHMSTDV) lie on the Cytoplasmic side of the membrane. Ser-448 carries the post-translational modification Phosphoserine. A Phosphothreonine modification is found at Thr-452.

This sequence belongs to the G-protein coupled receptor 1 family. In terms of assembly, interacts with VGF-derived peptide TLQP-21.

The protein resides in the cell membrane. Its function is as follows. Receptor for the chemotactic and inflammatory peptide anaphylatoxin C3a. This receptor stimulates chemotaxis, granule enzyme release and superoxide anion production. In Rattus norvegicus (Rat), this protein is C3a anaphylatoxin chemotactic receptor (C3ar1).